The sequence spans 190 residues: Protein GrpE (190 aa).

Over residues M1–K26 the composition is skewed to basic and acidic residues. A disordered region spans residues M1–K31.

This sequence belongs to the GrpE family. As to quaternary structure, homodimer.

It is found in the cytoplasm. Its function is as follows. Participates actively in the response to hyperosmotic and heat shock by preventing the aggregation of stress-denatured proteins, in association with DnaK and GrpE. It is the nucleotide exchange factor for DnaK and may function as a thermosensor. Unfolded proteins bind initially to DnaJ; upon interaction with the DnaJ-bound protein, DnaK hydrolyzes its bound ATP, resulting in the formation of a stable complex. GrpE releases ADP from DnaK; ATP binding to DnaK triggers the release of the substrate protein, thus completing the reaction cycle. Several rounds of ATP-dependent interactions between DnaJ, DnaK and GrpE are required for fully efficient folding. This Acholeplasma laidlawii (strain PG-8A) protein is Protein GrpE.